A 444-amino-acid polypeptide reads, in one-letter code: Tubulin beta chain (444 aa).

GTP-binding residues include Gln-11, Glu-69, Ser-138, Gly-142, Thr-143, Gly-144, Asn-204, and Asn-226. Residue Glu-69 coordinates Mg(2+).

Belongs to the tubulin family. As to quaternary structure, dimer of alpha and beta chains. A typical microtubule is a hollow water-filled tube with an outer diameter of 25 nm and an inner diameter of 15 nM. Alpha-beta heterodimers associate head-to-tail to form protofilaments running lengthwise along the microtubule wall with the beta-tubulin subunit facing the microtubule plus end conferring a structural polarity. Microtubules usually have 13 protofilaments but different protofilament numbers can be found in some organisms and specialized cells. Mg(2+) serves as cofactor.

The protein localises to the cytoplasm. The protein resides in the cytoskeleton. In terms of biological role, tubulin is the major constituent of microtubules, a cylinder consisting of laterally associated linear protofilaments composed of alpha- and beta-tubulin heterodimers. Microtubules grow by the addition of GTP-tubulin dimers to the microtubule end, where a stabilizing cap forms. Below the cap, tubulin dimers are in GDP-bound state, owing to GTPase activity of alpha-tubulin. The protein is Tubulin beta chain of Phytophthora cinnamomi (Cinnamon fungus).